Here is a 476-residue protein sequence, read N- to C-terminus: ATP synthase subunit beta (476 aa).

Residue 158–165 (GGAGVGKT) coordinates ATP.

Belongs to the ATPase alpha/beta chains family. F-type ATPases have 2 components, CF(1) - the catalytic core - and CF(0) - the membrane proton channel. CF(1) has five subunits: alpha(3), beta(3), gamma(1), delta(1), epsilon(1). CF(0) has three main subunits: a(1), b(2) and c(9-12). The alpha and beta chains form an alternating ring which encloses part of the gamma chain. CF(1) is attached to CF(0) by a central stalk formed by the gamma and epsilon chains, while a peripheral stalk is formed by the delta and b chains.

The protein localises to the cell inner membrane. It carries out the reaction ATP + H2O + 4 H(+)(in) = ADP + phosphate + 5 H(+)(out). Produces ATP from ADP in the presence of a proton gradient across the membrane. The catalytic sites are hosted primarily by the beta subunits. This is ATP synthase subunit beta from Paracidovorax citrulli (strain AAC00-1) (Acidovorax citrulli).